The sequence spans 797 residues: Protocadherin beta-11 (797 aa).

The N-terminal stretch at 1-26 (MENQGTRTQQIRQVLLLFVLLGMSQA) is a signal peptide. At 27-690 (GSETWSFSVA…AQADSLTVYL (664 aa)) the chain is on the extracellular side. Cadherin domains are found at residues 35–133 (VAEE…SPIF), 138–242 (MLLE…SPEF), 247–347 (YEVK…APEI), 352–451 (ITSP…APTF), and 456–561 (YTLF…SPFV). 4 N-linked (GlcNAc...) asparagine glycosylation sites follow: Asn418, Asn436, Asn487, and Asn567. Residues 568-671 (GSAPCTELVP…LVDGFSQPYL (104 aa)) enclose the Cadherin 6 domain. Residues 691–711 (VVALASVSSLFLFSVLLFVAV) form a helical membrane-spanning segment. At 712–797 (RLCRRSRAAS…TFRNSFGFNF (86 aa)) the chain is on the cytoplasmic side.

It localises to the cell membrane. Its function is as follows. Potential calcium-dependent cell-adhesion protein. May be involved in the establishment and maintenance of specific neuronal connections in the brain. This is Protocadherin beta-11 (PCDHB11) from Homo sapiens (Human).